Here is a 400-residue protein sequence, read N- to C-terminus: Flavo-diiron protein FprA2 (400 aa).

Residues 32-216 (GTSYNAYLIK…VVKGLDILDA (185 aa)) are zinc metallo-hydrolase. Fe cation is bound by residues His79, Glu81, Asp83, His147, Asp166, and His226. The 141-residue stretch at 257–397 (IPIFYCSAYG…KAFKFGEDFA (141 aa)) folds into the Flavodoxin-like domain. FMN is bound by residues 263-267 (SAYGN) and 345-372 (AFGS…KVFQ).

In the N-terminal section; belongs to the zinc metallo-hydrolase group 3 family. In terms of assembly, homotetramer. FMN is required as a cofactor. Fe cation serves as cofactor.

The catalysed reaction is 2 NADH + O2 + 2 H(+) = 2 NAD(+) + 2 H2O. Its function is as follows. Catalyzes the four-electron reduction of molecular oxygen to water. In fact, functions as the terminal component of an NADH oxidase (NADH:O(2) oxidoreductase) when using NADH:rubredoxin oxidoreductase (NROR) and rubredoxin (Rd) as electron transport intermediaries between NADH and FDP. Is thus able to reductively scavenge intracellular dioxygen and is part of an oxidative stress defense system in C.acetobutylicum, an obligate anaerobic bacterium. Can also serve as the terminal component of an NADH:nitric oxide oxidoreductase (NOR) with a catalytic efficiency comparable to that of its NADH oxidase activity, and therefore might have an in vivo role in scavenging nitric oxide. The protein is Flavo-diiron protein FprA2 (fprA2) of Clostridium acetobutylicum (strain ATCC 824 / DSM 792 / JCM 1419 / IAM 19013 / LMG 5710 / NBRC 13948 / NRRL B-527 / VKM B-1787 / 2291 / W).